The sequence spans 508 residues: Photosystem II CP47 reaction center protein (508 aa).

6 helical membrane passes run 21–36, 101–115, 140–156, 203–218, 237–252, and 457–472; these read SVHI…WAGS, IVFS…IWHW, GIHL…FGAF, IAAG…FHLS, VLSS…AFVV, and TFAL…HGAR.

It belongs to the PsbB/PsbC family. PsbB subfamily. As to quaternary structure, PSII is composed of 1 copy each of membrane proteins PsbA, PsbB, PsbC, PsbD, PsbE, PsbF, PsbH, PsbI, PsbJ, PsbK, PsbL, PsbM, PsbT, PsbX, PsbY, PsbZ, Psb30/Ycf12, at least 3 peripheral proteins of the oxygen-evolving complex and a large number of cofactors. It forms dimeric complexes. Binds multiple chlorophylls. PSII binds additional chlorophylls, carotenoids and specific lipids. serves as cofactor.

Its subcellular location is the plastid. It is found in the chloroplast thylakoid membrane. In terms of biological role, one of the components of the core complex of photosystem II (PSII). It binds chlorophyll and helps catalyze the primary light-induced photochemical processes of PSII. PSII is a light-driven water:plastoquinone oxidoreductase, using light energy to abstract electrons from H(2)O, generating O(2) and a proton gradient subsequently used for ATP formation. In Oryza sativa subsp. indica (Rice), this protein is Photosystem II CP47 reaction center protein.